Reading from the N-terminus, the 797-residue chain is Xaa-Pro dipeptidyl-peptidase (797 aa).

Residues Ser370, Asp490, and His521 each act as charge relay system in the active site.

Belongs to the peptidase S15 family. As to quaternary structure, homodimer.

The protein resides in the cytoplasm. The catalysed reaction is Hydrolyzes Xaa-Pro-|- bonds to release unblocked, N-terminal dipeptides from substrates including Ala-Pro-|-p-nitroanilide and (sequentially) Tyr-Pro-|-Phe-Pro-|-Gly-Pro-|-Ile.. Removes N-terminal dipeptides sequentially from polypeptides having unsubstituted N-termini provided that the penultimate residue is proline. In Lacticaseibacillus paracasei (strain ATCC 334 / BCRC 17002 / CCUG 31169 / CIP 107868 / KCTC 3260 / NRRL B-441) (Lactobacillus paracasei), this protein is Xaa-Pro dipeptidyl-peptidase.